A 95-amino-acid polypeptide reads, in one-letter code: DNA-directed RNA polymerase subunit Rpo11 (95 aa).

This sequence belongs to the archaeal Rpo11/eukaryotic RPB11/RPC19 RNA polymerase subunit family. Part of the RNA polymerase complex.

It is found in the cytoplasm. The catalysed reaction is RNA(n) + a ribonucleoside 5'-triphosphate = RNA(n+1) + diphosphate. DNA-dependent RNA polymerase (RNAP) catalyzes the transcription of DNA into RNA using the four ribonucleoside triphosphates as substrates. This chain is DNA-directed RNA polymerase subunit Rpo11, found in Pyrococcus furiosus (strain ATCC 43587 / DSM 3638 / JCM 8422 / Vc1).